The sequence spans 348 residues: Neuronal growth regulator 1 (348 aa).

Residues 1–31 (MVLLAQGACCSNQWLAAVLLSLCSCLPAGQS) form the signal peptide. Ig-like C2-type domains are found at residues 32–128 (VDFP…VHLT), 133–215 (PKIY…RVVV), and 219–307 (PTIQ…LPLN). A disulfide bridge connects residues C54 and C112. N67 and N149 each carry an N-linked (GlcNAc...) asparagine glycan. 2 cysteine pairs are disulfide-bonded: C154–C197 and C239–C291. Y181 carries the phosphotyrosine modification. N269, N280, N288, and N301 each carry an N-linked (GlcNAc...) asparagine glycan. G318 carries the GPI-anchor amidated glycine lipid modification. A propeptide spans 319–348 (SACDLFSCWSLALTLSSVISIFYLKNAILQ) (removed in mature form).

Belongs to the immunoglobulin superfamily. IgLON family. Glycosylated. In terms of tissue distribution, highly expressed in brain.

It localises to the cell membrane. In terms of biological role, may be involved in cell-adhesion. May function as a trans-neural growth-promoting factor in regenerative axon sprouting in the mammalian brain. The sequence is that of Neuronal growth regulator 1 (Negr1) from Rattus norvegicus (Rat).